The chain runs to 219 residues: Protein DMP5 (219 aa).

The tract at residues 1–24 (MSALRLRNANTPAPELDELSDQTP) is disordered. The next 4 membrane-spanning stretches (helical) occupy residues 51–71 (LSNL…PVFT), 82–102 (FLTA…SFTD), 142–162 (MRFV…AVAL), and 182–202 (VLDI…MVFP).

The protein belongs to the plant DMP1 protein family.

The protein resides in the endoplasmic reticulum membrane. Its function is as follows. Involved in membrane remodeling. This is Protein DMP5 from Arabidopsis thaliana (Mouse-ear cress).